Here is a 239-residue protein sequence, read N- to C-terminus: Increased recombination centers protein 22-1 (239 aa).

Positions 1 to 19 are cleaved as a signal peptide; the sequence is MKLSTIFTAFAATIATVAG. The Lumenal portion of the chain corresponds to 20–161; sequence YETTGSKQTV…AAVSFFDPRL (142 aa). The helical transmembrane segment at 162-182 threads the bilayer; that stretch reads IFLELVLLITFAGLIYVGYEI. The Cytoplasmic portion of the chain corresponds to 183 to 239; the sequence is WGKQYFKGVAPVKAKKVSAAKASSPVASGPSTTSATGYDTNWIPESHLKQKKTKKVN. Residues 201-213 are compositionally biased toward low complexity; that stretch reads AAKASSPVASGPS. The interval 201–222 is disordered; sequence AAKASSPVASGPSTTSATGYDT.

The protein belongs to the IRC22 family.

It localises to the endoplasmic reticulum membrane. Is probably involved in a pathway contributing to genomic integrity. The chain is Increased recombination centers protein 22-1 (IRC22-1) from Candida albicans (strain SC5314 / ATCC MYA-2876) (Yeast).